The primary structure comprises 255 residues: Leucyl/phenylalanyl-tRNA--protein transferase (255 aa).

The protein belongs to the L/F-transferase family.

The protein resides in the cytoplasm. The enzyme catalyses N-terminal L-lysyl-[protein] + L-leucyl-tRNA(Leu) = N-terminal L-leucyl-L-lysyl-[protein] + tRNA(Leu) + H(+). It carries out the reaction N-terminal L-arginyl-[protein] + L-leucyl-tRNA(Leu) = N-terminal L-leucyl-L-arginyl-[protein] + tRNA(Leu) + H(+). The catalysed reaction is L-phenylalanyl-tRNA(Phe) + an N-terminal L-alpha-aminoacyl-[protein] = an N-terminal L-phenylalanyl-L-alpha-aminoacyl-[protein] + tRNA(Phe). In terms of biological role, functions in the N-end rule pathway of protein degradation where it conjugates Leu, Phe and, less efficiently, Met from aminoacyl-tRNAs to the N-termini of proteins containing an N-terminal arginine or lysine. This is Leucyl/phenylalanyl-tRNA--protein transferase from Burkholderia pseudomallei (strain 1106a).